The chain runs to 260 residues: Putative nudix hydrolase 6 (260 aa).

The Nudix hydrolase domain occupies 113–257 (PNHAADPIVS…SHFIDLLKES (145 aa)). A Nudix box motif is present at residues 148–170 (GMVDAGEHVSQTLRREFAEEAMH). 2 residues coordinate Mg(2+): glutamate 163 and glutamate 167.

This sequence belongs to the Nudix hydrolase family. Mg(2+) is required as a cofactor. The cofactor is Mn(2+).

Probably mediates the hydrolysis of some nucleoside diphosphate derivatives. The protein is Putative nudix hydrolase 6 (ndx-6) of Caenorhabditis elegans.